A 427-amino-acid polypeptide reads, in one-letter code: Male abnormal protein mab-31 (427 aa).

The segment at 68-102 is disordered; that stretch reads PIGTGRFPNPSPPRSSSGTNTPIRKTPGSRPDRGK.

It is found in the nucleus. In terms of biological role, putative transcription factor. Acts in a TGF-beta-like pathway during development of male-specific genital sensilla (simple sense organs), known as rays. Involved in production of reactive oxygen species (ROS), acting downstream of the TGF-beta-like dbl-1 signaling pathway. Involved in locomotory behavior. This is Male abnormal protein mab-31 from Caenorhabditis elegans.